The following is a 156-amino-acid chain: Large ribosomal subunit protein uL15 (156 aa).

Residues 1–11 (MKLNDLRDKPG) show a composition bias toward basic and acidic residues. The disordered stretch occupies residues 1–44 (MKLNDLRDKPGSVKARKRVGRGIGSGTGKTGGRGVKGQKSRSGV). The span at 21–35 (RGIGSGTGKTGGRGV) shows a compositional bias: gly residues.

This sequence belongs to the universal ribosomal protein uL15 family. As to quaternary structure, part of the 50S ribosomal subunit.

In terms of biological role, binds to the 23S rRNA. The polypeptide is Large ribosomal subunit protein uL15 (Brucella abortus (strain S19)).